A 266-amino-acid chain; its full sequence is Putative carbamate hydrolase RutD (266 aa).

It belongs to the AB hydrolase superfamily. Hydrolase RutD family.

It catalyses the reaction carbamate + 2 H(+) = NH4(+) + CO2. In terms of biological role, involved in pyrimidine catabolism. May facilitate the hydrolysis of carbamate, a reaction that can also occur spontaneously. The sequence is that of Putative carbamate hydrolase RutD from Escherichia coli O157:H7.